Here is a 428-residue protein sequence, read N- to C-terminus: Serine--tRNA ligase (428 aa).

L-serine is bound at residue 236 to 238; sequence TAE. 267–269 contacts ATP; the sequence is RSE. Residue E290 coordinates L-serine. Position 354–357 (354–357) interacts with ATP; that stretch reads EISS. Residue S388 coordinates L-serine.

The protein belongs to the class-II aminoacyl-tRNA synthetase family. Type-1 seryl-tRNA synthetase subfamily. In terms of assembly, homodimer. The tRNA molecule binds across the dimer.

Its subcellular location is the cytoplasm. It catalyses the reaction tRNA(Ser) + L-serine + ATP = L-seryl-tRNA(Ser) + AMP + diphosphate + H(+). The catalysed reaction is tRNA(Sec) + L-serine + ATP = L-seryl-tRNA(Sec) + AMP + diphosphate + H(+). It participates in aminoacyl-tRNA biosynthesis; selenocysteinyl-tRNA(Sec) biosynthesis; L-seryl-tRNA(Sec) from L-serine and tRNA(Sec): step 1/1. Its function is as follows. Catalyzes the attachment of serine to tRNA(Ser). Is also able to aminoacylate tRNA(Sec) with serine, to form the misacylated tRNA L-seryl-tRNA(Sec), which will be further converted into selenocysteinyl-tRNA(Sec). This chain is Serine--tRNA ligase, found in Psychrobacter cryohalolentis (strain ATCC BAA-1226 / DSM 17306 / VKM B-2378 / K5).